A 113-amino-acid chain; its full sequence is Photosystem II reaction center Psb28 protein (113 aa).

It belongs to the Psb28 family. In terms of assembly, part of the photosystem II complex.

The protein resides in the cellular thylakoid membrane. This Prochlorococcus marinus (strain NATL2A) protein is Photosystem II reaction center Psb28 protein.